The sequence spans 356 residues: Phenylalanine--tRNA ligase alpha subunit (356 aa).

Residue Glu-258 participates in Mg(2+) binding.

It belongs to the class-II aminoacyl-tRNA synthetase family. Phe-tRNA synthetase alpha subunit type 1 subfamily. As to quaternary structure, tetramer of two alpha and two beta subunits. It depends on Mg(2+) as a cofactor.

The protein resides in the cytoplasm. The enzyme catalyses tRNA(Phe) + L-phenylalanine + ATP = L-phenylalanyl-tRNA(Phe) + AMP + diphosphate + H(+). The protein is Phenylalanine--tRNA ligase alpha subunit of Macrococcus caseolyticus (strain JCSC5402) (Macrococcoides caseolyticum).